Reading from the N-terminus, the 956-residue chain is Probable hypoxanthine oxidase XdhD (956 aa).

3 residues coordinate Mo-molybdopterin: Q414, F445, and A727.

Belongs to the xanthine dehydrogenase family. [2Fe-2S] cluster is required as a cofactor. Mo-molybdopterin serves as cofactor.

Functionally, probably has no xanthine dehydrogenase activity; however deletion results in increased adenine sensitivity, suggesting that this protein contributes to the conversion of adenine to guanine nucleotides during purine salvage. In Escherichia coli (strain K12), this protein is Probable hypoxanthine oxidase XdhD (xdhD).